The chain runs to 335 residues: Serpentine receptor class alpha-25 (335 aa).

Transmembrane regions (helical) follow at residues 22 to 42, 151 to 171, 195 to 215, 245 to 265, and 280 to 300; these read IPVKISFLIIATVIFLSFYFA, LLIIQCLLSFGTYYVGLYGVP, FRTVVMVFCIIVIIFVYYLSV, CILIVLQFACILMSSYGVNYI, and LAPFFAGVTYASLCLPLVIYF.

Belongs to the nematode receptor-like protein sra family.

Its subcellular location is the membrane. The sequence is that of Serpentine receptor class alpha-25 (sra-25) from Caenorhabditis elegans.